Here is a 424-residue protein sequence, read N- to C-terminus: Myb family transcription factor RLI1 (424 aa).

Residues 144–165 (RPQKRDSGERTPLPPPSQQQHQ) form a disordered region. The HTH myb-type domain maps to 238 to 298 (APSKTRIRWT…HLQKYRIAKY (61 aa)). The segment at residues 269-294 (PKGILKLMNSDGLTIYHIKSHLQKYR) is a DNA-binding region (H-T-H motif). An LHEQLE motif is present at residues 342–347 (LHEQLE). Residues 342–391 (LHEQLEIQRNLQLRIEEQGKRLQKMFEDQLKASRSVMEPQELDDVVAFAA) adopt a coiled-coil conformation.

This sequence belongs to the MYB-CC family. As to quaternary structure, homodimer. Interacts with PHR2 in the nucleus. Interacts with SPX1 and SPX2 in the nucleus; these interactions prevent binding to the promoters of target genes, thus regulating negatively leaf inclination in response to phosphate (Pi) starvation.

Its subcellular location is the nucleus. Transcription factor binding to specific DNA sequences of target genes promoters, such as the motif R1BS 5'-NAKATNCN-3' and the motif P1BS 5'-GNATATNC-3' to trigger their expression. Nitrate-induced component involved in modulating phosphate (Pi) response and homeostasis together with PHR2; activates directly the expression of Pi starvation-induced (PSI) genes upon nitrate disponibility, thus triggering the nitrate-induced phosphate response (NIPR) promoting Pi uptake activity. Involved in the shoot architecture; positively regulates leaf inclination by affecting lamina joint cell elongation via the direct promotion of ILI4/BU1 and BC1 genes expression, especially in response to phosphate (Pi) availability. Regulates both brassinolide (BL) biosynthesis and signaling by directly activating BL-biosynthesis and signaling genes. The sequence is that of Myb family transcription factor RLI1 from Oryza sativa subsp. indica (Rice).